The chain runs to 202 residues: Na(+)-translocating NADH-quinone reductase subunit E (202 aa).

A run of 6 helical transmembrane segments spans residues Ala11–Ile31, Val35–Ala55, Leu79–Glu99, Gly114–Val134, Val144–Ile164, and Leu180–Val200.

Belongs to the NqrDE/RnfAE family. As to quaternary structure, composed of six subunits; NqrA, NqrB, NqrC, NqrD, NqrE and NqrF.

The protein resides in the cell inner membrane. The enzyme catalyses a ubiquinone + n Na(+)(in) + NADH + H(+) = a ubiquinol + n Na(+)(out) + NAD(+). Its function is as follows. NQR complex catalyzes the reduction of ubiquinone-1 to ubiquinol by two successive reactions, coupled with the transport of Na(+) ions from the cytoplasm to the periplasm. NqrA to NqrE are probably involved in the second step, the conversion of ubisemiquinone to ubiquinol. This is Na(+)-translocating NADH-quinone reductase subunit E from Stutzerimonas stutzeri (strain A1501) (Pseudomonas stutzeri).